The following is a 72-amino-acid chain: Translation initiation factor IF-1 (72 aa).

One can recognise an S1-like domain in the interval 2–72 (AKDDVIEVEG…TRGRITYRYK (71 aa)). Tyr-60 is subject to Phosphotyrosine.

The protein belongs to the IF-1 family. In terms of assembly, component of the 30S ribosomal translation pre-initiation complex which assembles on the 30S ribosome in the order IF-2 and IF-3, IF-1 and N-formylmethionyl-tRNA(fMet); mRNA recruitment can occur at any time during PIC assembly.

The protein resides in the cytoplasm. In terms of biological role, one of the essential components for the initiation of protein synthesis. Stabilizes the binding of IF-2 and IF-3 on the 30S subunit to which N-formylmethionyl-tRNA(fMet) subsequently binds. Helps modulate mRNA selection, yielding the 30S pre-initiation complex (PIC). Upon addition of the 50S ribosomal subunit IF-1, IF-2 and IF-3 are released leaving the mature 70S translation initiation complex. This Bacillus subtilis (strain 168) protein is Translation initiation factor IF-1.